The primary structure comprises 99 residues: A-type ATP synthase subunit F (99 aa).

Belongs to the V-ATPase F subunit family. In terms of assembly, has multiple subunits with at least A(3), B(3), C, D, E, F, H, I and proteolipid K(x).

The protein resides in the cell membrane. Functionally, component of the A-type ATP synthase that produces ATP from ADP in the presence of a proton gradient across the membrane. The protein is A-type ATP synthase subunit F of Methanococcus vannielii (strain ATCC 35089 / DSM 1224 / JCM 13029 / OCM 148 / SB).